We begin with the raw amino-acid sequence, 720 residues long: Ciliated left-right organizer metallopeptidase (720 aa).

A signal peptide spans 1–25 (MTVSFSMFQIYRLVWLSFMTSMCLS). Over 26 to 668 (ACIHDSVLQE…ALYVSHMLYS (643 aa)) the chain is Extracellular. Position 243 (histidine 243) interacts with Zn(2+). Glutamate 244 is a catalytic residue. 2 residues coordinate Zn(2+): histidine 247 and histidine 322. A helical membrane pass occupies residues 669-689 (YVIGGGCCAVCGAAIIFALFW). The Cytoplasmic segment spans residues 690-720 (YKLRRQFLRVGSSYPPETSNHERPQIPADLV).

This sequence belongs to the peptidase M8 family. Zn(2+) is required as a cofactor.

It localises to the membrane. Putative metalloprotease playing a role in the process of LR patterning. The chain is Ciliated left-right organizer metallopeptidase (cirop) from Xenopus laevis (African clawed frog).